We begin with the raw amino-acid sequence, 334 residues long: Aspartate carbamoyltransferase catalytic subunit (334 aa).

2 residues coordinate carbamoyl phosphate: arginine 71 and threonine 72. An L-aspartate-binding site is contributed by lysine 99. The carbamoyl phosphate site is built by arginine 121, histidine 151, and glutamine 154. The L-aspartate site is built by arginine 184 and arginine 239. Glycine 280 and proline 281 together coordinate carbamoyl phosphate.

The protein belongs to the aspartate/ornithine carbamoyltransferase superfamily. ATCase family. Heterododecamer (2C3:3R2) of six catalytic PyrB chains organized as two trimers (C3), and six regulatory PyrI chains organized as three dimers (R2).

It catalyses the reaction carbamoyl phosphate + L-aspartate = N-carbamoyl-L-aspartate + phosphate + H(+). The protein operates within pyrimidine metabolism; UMP biosynthesis via de novo pathway; (S)-dihydroorotate from bicarbonate: step 2/3. Catalyzes the condensation of carbamoyl phosphate and aspartate to form carbamoyl aspartate and inorganic phosphate, the committed step in the de novo pyrimidine nucleotide biosynthesis pathway. This chain is Aspartate carbamoyltransferase catalytic subunit, found in Pseudomonas savastanoi pv. phaseolicola (strain 1448A / Race 6) (Pseudomonas syringae pv. phaseolicola (strain 1448A / Race 6)).